The primary structure comprises 391 residues: Elongation factor Tu (391 aa).

Positions 10–201 (KPHVNIGTIG…AVDAYIPTPE (192 aa)) constitute a tr-type G domain. The interval 19 to 26 (GHVDHGKT) is G1. Position 19-26 (19-26 (GHVDHGKT)) interacts with GTP. Mg(2+) is bound at residue Thr-26. The interval 55–59 (GITIS) is G2. The interval 76 to 79 (DCPG) is G3. GTP contacts are provided by residues 76 to 80 (DCPGH) and 131 to 134 (NKVD). The segment at 131–134 (NKVD) is G4. Residues 169 to 171 (SAL) form a G5 region.

The protein belongs to the TRAFAC class translation factor GTPase superfamily. Classic translation factor GTPase family. EF-Tu/EF-1A subfamily. Monomer.

The protein resides in the cytoplasm. It carries out the reaction GTP + H2O = GDP + phosphate + H(+). In terms of biological role, GTP hydrolase that promotes the GTP-dependent binding of aminoacyl-tRNA to the A-site of ribosomes during protein biosynthesis. The chain is Elongation factor Tu from Rhizobium johnstonii (strain DSM 114642 / LMG 32736 / 3841) (Rhizobium leguminosarum bv. viciae).